Reading from the N-terminus, the 189-residue chain is Ribosome maturation factor RimM (189 aa).

In terms of domain architecture, PRC barrel spans E96–G169. The tract at residues L170–S189 is disordered.

This sequence belongs to the RimM family. As to quaternary structure, binds ribosomal protein uS19.

It localises to the cytoplasm. Functionally, an accessory protein needed during the final step in the assembly of 30S ribosomal subunit, possibly for assembly of the head region. Essential for efficient processing of 16S rRNA. May be needed both before and after RbfA during the maturation of 16S rRNA. It has affinity for free ribosomal 30S subunits but not for 70S ribosomes. The sequence is that of Ribosome maturation factor RimM from Brucella anthropi (strain ATCC 49188 / DSM 6882 / CCUG 24695 / JCM 21032 / LMG 3331 / NBRC 15819 / NCTC 12168 / Alc 37) (Ochrobactrum anthropi).